The following is a 132-amino-acid chain: Chemokine-like protein TAFA-5 (132 aa).

Positions 1–43 are cleaved as a signal peptide; sequence MAPSPRTGSRQDATALPSMSSTFWAFMILASLLIAYCSQLAAG. A glycan (N-linked (GlcNAc...) asparagine) is linked at Asn113.

Belongs to the TAFA family. As to expression, expressed in the subcutaneous and perirenal adipose tissue (at protein level). Highly expressed in adipose tissue with moderate expression in the brain and ovary. Isoform 2: Brain-specific.

It localises to the secreted. In terms of biological role, acts as a chemokine-like protein by regulating cell proliferation and migration through activation of G protein-coupled receptors (GPCRs), such as S1PR2 and FPR2. Stimulates chemotactic migration of macrophages mediated by the MAPK3/ERK1 and AKT1 pathway. Blocks TNFSF11/RANKL-induced osteoclast formation from macrophages by inhibiting up-regulation of osteoclast fusogenic and differentiation genes. Stimulation of macrophage migration and inhibition of osteoclast formation is mediated via GPCR FPR2. Acts as an adipokine by negatively regulating vascular smooth muscle cell (VSMC) proliferation and migration in response to platelet-derived growth factor stimulation via GPCR S1PR2 and G protein GNA12/GNA13-transmitted RHOA signaling. Inhibits injury-induced cell proliferation and neointima formation in the femoral arteries. The polypeptide is Chemokine-like protein TAFA-5 (Homo sapiens (Human)).